The chain runs to 172 residues: MLSRSHSNATMSTTRHRLLATASRFVETLESLDMDAMLAVRSSTCLHHMCCPSFRNYSITNDQTREALPQWKATIKKYKFGVLDDSQTLVDEQARKVMIRAETAAETTVGDYNNEYVFILRMTEDCNAVDEIWEFYDTIRLRDLRHRLEAGHVPIGVDAPAPFTTTASPAAL.

Belongs to the trt14 isomerase family. Homodimer.

It functions in the pathway secondary metabolite biosynthesis; terpenoid biosynthesis. Its function is as follows. Part of the gene cluster B that mediates the biosynthesis of the fungal meroterpenoid acetoxydehydroaustin. The first step of the pathway is the synthesis of 3,5-dimethylorsellinic acid by the polyketide synthase ausA. 3,5-dimethylorsellinic acid is then prenylated by the polyprenyl transferase ausN. Further epoxidation by the FAD-dependent monooxygenase ausM and cyclization by the probable terpene cyclase ausL lead to the formation of protoaustinoid A. Protoaustinoid A is then oxidized to spiro-lactone preaustinoid A3 by the combined action of the FAD-binding monooxygenases ausB and ausC, and the dioxygenase ausE. Acid-catalyzed keto-rearrangement and ring contraction of the tetraketide portion of preaustinoid A3 by ausJ lead to the formation of preaustinoid A4. The aldo-keto reductase ausK, with the help of ausH, is involved in the next step by transforming preaustinoid A4 into isoaustinone which is in turn hydroxylated by the P450 monooxygenase ausI to form austinolide. The cytochrome P450 monooxygenase ausG then modifies austinolide to austinol. Austinol is further acetylated to austin by the O-acetyltransferase ausP, which spontaneously changes to dehydroaustin. The cytochrome P450 monooxygenase then converts dehydroaustin is into 7-dehydrodehydroaustin. The hydroxylation catalyzed by ausR permits the second O-acetyltransferase ausQ to add an additional acetyl group to the molecule, leading to the formation of acetoxydehydroaustin. Due to genetic rearrangements of the clusters and the subsequent loss of some enzymes, the end product of the Penicillium brasilianum austinoid biosynthesis clusters is acetoxydehydroaustin. The polypeptide is Austinoid biosynthesis clusters protein J (Penicillium brasilianum).